The primary structure comprises 245 residues: 1-(5-phosphoribosyl)-5-[(5-phosphoribosylamino)methylideneamino] imidazole-4-carboxamide isomerase (245 aa).

Asp11 acts as the Proton acceptor in catalysis. The active-site Proton donor is Asp132.

This sequence belongs to the HisA/HisF family.

The protein localises to the cytoplasm. It carries out the reaction 1-(5-phospho-beta-D-ribosyl)-5-[(5-phospho-beta-D-ribosylamino)methylideneamino]imidazole-4-carboxamide = 5-[(5-phospho-1-deoxy-D-ribulos-1-ylimino)methylamino]-1-(5-phospho-beta-D-ribosyl)imidazole-4-carboxamide. Its pathway is amino-acid biosynthesis; L-histidine biosynthesis; L-histidine from 5-phospho-alpha-D-ribose 1-diphosphate: step 4/9. The sequence is that of 1-(5-phosphoribosyl)-5-[(5-phosphoribosylamino)methylideneamino] imidazole-4-carboxamide isomerase from Bacillus pumilus (strain SAFR-032).